The following is a 308-amino-acid chain: Probable GTP 3',8-cyclase (308 aa).

Residues 4-224 form the Radical SAM core domain; it reads RFGRPLEDLR…QIRKKHFRPR (221 aa). R13 provides a ligand contact to GTP. [4Fe-4S] cluster-binding residues include C20, C24, and C27. K60 lines the GTP pocket. G64 is a binding site for S-adenosyl-L-methionine. T90 is a binding site for GTP. Residue S114 participates in S-adenosyl-L-methionine binding. Position 151 (K151) interacts with GTP. Residues C245 and C248 each contribute to the [4Fe-4S] cluster site. 250–252 is a binding site for GTP; sequence RIR. A [4Fe-4S] cluster-binding site is contributed by C262.

Belongs to the radical SAM superfamily. MoaA family. Requires [4Fe-4S] cluster as cofactor.

It carries out the reaction GTP + AH2 + S-adenosyl-L-methionine = (8S)-3',8-cyclo-7,8-dihydroguanosine 5'-triphosphate + 5'-deoxyadenosine + L-methionine + A + H(+). It participates in cofactor biosynthesis; molybdopterin biosynthesis. Catalyzes the cyclization of GTP to (8S)-3',8-cyclo-7,8-dihydroguanosine 5'-triphosphate. The polypeptide is Probable GTP 3',8-cyclase (Saccharolobus islandicus (strain L.S.2.15 / Lassen #1) (Sulfolobus islandicus)).